A 91-amino-acid chain; its full sequence is Pre-early 3 receptor internalization and degradation alpha protein (91 aa).

At 1 to 4 (MIPR) the chain is on the cytoplasmic side. The propeptide at 1–22 (MIPRVLILLTLVALFCACSTLA) is signal peptide. The helical transmembrane segment at 5–25 (VLILLTLVALFCACSTLAAVA) threads the bilayer. The Lumenal segment spans residues 26–34 (HIEVDCIPP). The helical transmembrane segment at 35–60 (FTVYLLYGFVTLILICSLVTVVIAFI) threads the bilayer. Residues 61–91 (QFIDWVCVRIAYLRHHPQYRDRTIADLLRIL) lie on the Cytoplasmic side of the membrane.

Belongs to the adenoviridae E3-RID-alpha family. In terms of assembly, homodimer with only one chain cleaved by signal peptidase. Interacts with E3 RID-beta and E3 CR1-alpha. The signal peptide is only cleaved partially by host signal peptidase. This results in two forms of the protein, one uncleaved with two transmembrane regions, and one cleaved with one transmembrane region.

It is found in the host membrane. The protein localises to the host endoplasmic reticulum. Its function is as follows. Prevents infected cell apoptosis induced by the host immune system. Acts by down-regulating a number of cell surface receptors in the tumor necrosis factor (TNF) receptor superfamily, namely FAS, TNFRSF10A/TRAIL receptor 1, and TNFRSF10B/TRAIL receptor 2. Down-regulation of these death receptors protects adenovirus-infected cells from apoptosis induced by the death receptor ligands Fas ligand and TRAIL. RID complex also down-regulates certain tyrosine kinase cell surface receptors, especially the epidermal growth factor receptor (EGFR). RID-mediated Fas and EGFR down-regulation occurs via endocytosis of the receptors into endosomes followed by transport to and degradation within lysosomes. In Homo sapiens (Human), this protein is Pre-early 3 receptor internalization and degradation alpha protein.